The sequence spans 250 residues: MTRINTNTQKNNNTKFSKLILGVMVSSIVLSGCSATPERMEKFSYEPNYPMNIPKKTVPKNGSLYQSGDAITLFDDSRAHKVGDIITINLAENFDAKKKDEAKYDKSNQQNFGLNGQAAVGSNASVFGGNVSVPGLGSGIGIGYGSDGSFAGKSDVKQKSSLSGSIAVTVVQVISNGNLVIRGEKWITIHEGEEVIRFAGIVRPQDIRPDNTIDSEKVADVRLIYKDTGISGDTNRPGAMTQWLHKYWPL.

An N-terminal signal peptide occupies residues 1–32 (MTRINTNTQKNNNTKFSKLILGVMVSSIVLSG). A lipid anchor (N-palmitoyl cysteine) is attached at Cys-33. Cys-33 carries the S-diacylglycerol cysteine lipid modification.

This sequence belongs to the FlgH family. The basal body constitutes a major portion of the flagellar organelle and consists of four rings (L,P,S, and M) mounted on a central rod.

The protein resides in the cell outer membrane. Its subcellular location is the bacterial flagellum basal body. Functionally, assembles around the rod to form the L-ring and probably protects the motor/basal body from shearing forces during rotation. This is Flagellar L-ring protein from Hydrogenovibrio crunogenus (strain DSM 25203 / XCL-2) (Thiomicrospira crunogena).